Here is a 269-residue protein sequence, read N- to C-terminus: Myelin protein zero-like protein 1 (269 aa).

Residues 1–35 (MAASAGAGAVIAAPDSRRWLWSVLAAALGLLTAGV) form the signal peptide. One can recognise an Ig-like V-type domain in the interval 36–146 (SALEVYTPKE…VKNPPDIVVQ (111 aa)). At 36–162 (SALEVYTPKE…YVVEKENLPV (127 aa)) the chain is on the extracellular side. Asn-50 and Asn-130 each carry an N-linked (GlcNAc...) asparagine glycan. Residues Cys-58 and Cys-135 are joined by a disulfide bond. A helical transmembrane segment spans residues 163–183 (FPVWVVVGIVTAVVLGLTLLI). At 184–269 (SMILAVLYRR…SVVYADIRKN (86 aa)) the chain is on the cytoplasmic side. The disordered stretch occupies residues 199 to 238 (DYTGCSTSESLSPVKQAPRKSPSDTEGLVKSLPSGSHQGP). Residues 202–211 (GCSTSESLSP) are compositionally biased toward polar residues. A phosphoserine mark is found at Ser-204, Ser-206, Ser-208, Ser-210, Ser-219, and Ser-221. The ITIM motif 1 motif lies at 239–244 (VIYAQL). Tyr-241 bears the Phosphotyrosine mark. Ser-260 carries the phosphoserine modification. The ITIM motif 2 motif lies at 261-266 (VVYADI). The residue at position 263 (Tyr-263) is a Phosphotyrosine.

It belongs to the myelin P0 protein family. Interacts with phosphorylated PTPN11/SHP-2. In terms of processing, phosphorylated on tyrosine residues upon stimulation with pervanadate and concanavalin-A (ConA). Phosphorylation at Tyr-241 and Tyr-263 is required for interaction with PTPN11/SHP-2. Dephosphorylated by PTPN11/SHP-2 (in vitro). Post-translationally, N-glycosylated. N-glycosylation is required for concanavalin A binding. In terms of tissue distribution, widely expressed with highest levels in heart, placenta, kidney and pancreas. Isoform 3 is relatively abundant in hematopoietic tissues and fetal liver. Isoform 1 and isoform 3 are expressed in CD14- PB monocytes and pre-B cell progenitors. Isoform 3 appears to be the major isoform in CD34- promyelocytic and promonocytic cells. During differentiation in monocytic cells, the expression level of isoform 3 decreases and that of isoform 1 increases. Isoform 1 is prominent in stromal cells and, to a lesser extent, in umbilical vein endothelial cells and erythroid progenitors. Isoform 2 is expressed in a erythroid progenitor cell line.

It is found in the membrane. Functionally, cell surface receptor, which is involved in signal transduction processes. Recruits PTPN11/SHP-2 to the cell membrane and is a putative substrate of PTPN11/SHP-2. Is a major receptor for concanavalin-A (ConA) and is involved in cellular signaling induced by ConA, which probably includes Src family tyrosine-protein kinases. Isoform 3 seems to have a dominant negative role; it blocks tyrosine phosphorylation of MPZL1 induced by ConA. Isoform 1, but not isoform 2 and isoform 3, may be involved in regulation of integrin-mediated cell motility. The chain is Myelin protein zero-like protein 1 (MPZL1) from Homo sapiens (Human).